Here is a 546-residue protein sequence, read N- to C-terminus: Fusion glycoprotein F0 (546 aa).

A signal peptide spans 1–19; sequence MRIPLAALIAMTIPCLATG. The Extracellular portion of the chain corresponds to 20-491; that stretch reads QIHWGNLSKI…NIKGVSVTNT (472 aa). N-linked (GlcNAc...) asparagine; by host glycosylation is found at Asn25, Asn57, and Asn63. Residues 109 to 133 form a fusion peptide region; the sequence is FAGVVLAGAALGVATAAQITAGIAL. Positions 134–162 form a coiled coil; that stretch reads HQSMMNSQAIESLKASLVTTNQAIEEIRQ. 3 disulfides stabilise this stretch: Cys354–Cys362, Cys386–Cys391, and Cys393–Cys416. Residues 458–483 are a coiled coil; it reads DLGNAVTKLERAKDLLDSSDLILKNI. Residues 492–512 traverse the membrane as a helical segment; the sequence is GYILIGVGLIAVVGIIIVTCC. Residues 513 to 546 are Cytoplasmic-facing; sequence CKKSSSDSRASTVVLNPGLKPDLTGTSKSYIRSL.

It belongs to the paramyxoviruses fusion glycoprotein family. As to quaternary structure, homotrimer of disulfide-linked F1-F2. The inactive precursor F0 is glycosylated and proteolytically cleaved into F1 and F2 to be functionally active. The cleavage is mediated by cellular proteases during the transport and maturation of the polypeptide.

It is found in the virion membrane. The protein localises to the host cell membrane. Class I viral fusion protein. Under the current model, the protein has at least 3 conformational states: pre-fusion native state, pre-hairpin intermediate state, and post-fusion hairpin state. During viral and plasma cell membrane fusion, the heptad repeat (HR) regions assume a trimer-of-hairpins structure, positioning the fusion peptide in close proximity to the C-terminal region of the ectodomain. The formation of this structure appears to drive apposition and subsequent fusion of viral and plasma cell membranes. Directs fusion of viral and cellular membranes leading to delivery of the nucleocapsid into the cytoplasm. This fusion is pH independent and occurs directly at the outer cell membrane. The trimer of F1-F2 (F protein) probably interacts with HN at the virion surface. Upon HN binding to its cellular receptor, the hydrophobic fusion peptide is unmasked and interacts with the cellular membrane, inducing the fusion between cell and virion membranes. Later in infection, F proteins expressed at the plasma membrane of infected cells could mediate fusion with adjacent cells to form syncytia, a cytopathic effect that could lead to tissue necrosis. This Bos indicus (Zebu) protein is Fusion glycoprotein F0 (F).